A 118-amino-acid polypeptide reads, in one-letter code: MARVKRGVIARARHKKILKQAKGYYGARSRVYRVAFQAVIKAGQYAYRDRRQRKRQFRQLWIARINAAARVNGLSYSKFINGLKKASIEIDRKILADIAVFDKVAFGALVEKAKAALA.

The protein belongs to the bacterial ribosomal protein bL20 family.

Its function is as follows. Binds directly to 23S ribosomal RNA and is necessary for the in vitro assembly process of the 50S ribosomal subunit. It is not involved in the protein synthesizing functions of that subunit. In Serratia proteamaculans (strain 568), this protein is Large ribosomal subunit protein bL20.